We begin with the raw amino-acid sequence, 65 residues long: Large ribosomal subunit protein bL35 (65 aa).

Over residues 1-11 (MPKIKTRRSAA) the composition is skewed to basic residues. Residues 1-25 (MPKIKTRRSAAKRFSVTGSGKFRRR) are disordered.

Belongs to the bacterial ribosomal protein bL35 family.

The polypeptide is Large ribosomal subunit protein bL35 (Nitratidesulfovibrio vulgaris (strain ATCC 29579 / DSM 644 / CCUG 34227 / NCIMB 8303 / VKM B-1760 / Hildenborough) (Desulfovibrio vulgaris)).